We begin with the raw amino-acid sequence, 981 residues long: Calsyntenin-1 (981 aa).

The N-terminal stretch at 1–28 (MLRRPAPALAPAARLLLAGLLCGGGVWA) is a signal peptide. Residues 29–859 (ARVNKHKPWL…PHPFAVVPST (831 aa)) are Extracellular-facing. Cadherin domains follow at residues 38-164 (LEPT…APVF) and 165-265 (KEKS…TPGW). Residues asparagine 346, asparagine 366, and asparagine 515 are each glycosylated (N-linked (GlcNAc...) asparagine). Residues 860 to 880 (ATVVIVVCVSFLVFMIILGVF) traverse the membrane as a helical segment. The Cytoplasmic segment spans residues 881 to 981 (RIRAAHRRTM…LEWDDSTLSY (101 aa)). The segment at 915 to 981 (METYEDQHSS…LEWDDSTLSY (67 aa)) is disordered. Positions 925-960 (EEEEEEEEEEESEDGEEEDDITSAESESSEEEEGEQ) are enriched in acidic residues. Over residues 962-981 (DPQNATRQQQLEWDDSTLSY) the composition is skewed to polar residues.

It belongs to the calsyntenin family. In terms of assembly, directly interacts with APBA2. Forms a tripartite complex with APBA2 and APP. Interacts with KLC1. Interacts with APBB1; this interaction stabilizes AlcICD metabolism. As to quaternary structure, interacts with PSEN1. Post-translationally, proteolytically processed under normal cellular conditions. A primary zeta-cleavage generates a large extracellular (soluble) N-terminal domain (sAlc) and a short C-terminal transmembrane fragment (CTF1). A secondary cleavage catalyzed by presenilin gamma-secretase within the transmembrane domain releases the beta-Alc-alpha chain in the extracellular milieu and produces an intracellular fragment (AlcICD). This processing is strongly suppressed in the tripartite complex formed with APBA2 and APP, which seems to prevent the association with PSEN1. Expressed in the brain and, a lower level, in the heart, skeletal muscle, kidney and placenta. Accumulates in dystrophic neurites around the amyloid core of Alzheimer disease senile plaques (at protein level).

The protein localises to the postsynaptic cell membrane. Its subcellular location is the endoplasmic reticulum membrane. The protein resides in the golgi apparatus membrane. It localises to the cell projection. It is found in the neuron projection. The protein localises to the nucleus. In terms of biological role, postsynaptic adhesion molecule that binds to presynaptic neurexins to mediate both excitatory and inhibitory synapse formation. Promotes synapse development by acting as a cell adhesion molecule at the postsynaptic membrane, which associates with neurexin-alpha at the presynaptic membrane. Also functions as a cargo in axonal anterograde transport by acting as a molecular adapter that promotes KLC1 association with vesicles. Complex formation with APBA2 and APP, stabilizes APP metabolism and enhances APBA2-mediated suppression of beta-APP40 secretion, due to the retardation of intracellular APP maturation. As intracellular fragment AlcICD, suppresses APBB1-dependent transactivation stimulated by APP C-terminal intracellular fragment (AICD), most probably by competing with AICD for APBB1-binding. Its function is as follows. In complex with APBA2 and C99, a C-terminal APP fragment, abolishes C99 interaction with PSEN1 and thus APP C99 cleavage by gamma-secretase, most probably through stabilization of the direct interaction between APBA2 and APP. The protein is Calsyntenin-1 of Homo sapiens (Human).